The chain runs to 875 residues: Protein translocase subunit SecA (875 aa).

ATP-binding positions include Gln-87, 105–109 (GEGKT), and Asp-512. Zn(2+)-binding residues include Cys-860, Cys-862, Cys-871, and His-872.

The protein belongs to the SecA family. Monomer and homodimer. Part of the essential Sec protein translocation apparatus which comprises SecA, SecYEG and auxiliary proteins SecDF-YajC and YidC. Zn(2+) serves as cofactor.

The protein resides in the cell inner membrane. Its subcellular location is the cytoplasm. The enzyme catalyses ATP + H2O + cellular proteinSide 1 = ADP + phosphate + cellular proteinSide 2.. Part of the Sec protein translocase complex. Interacts with the SecYEG preprotein conducting channel. Has a central role in coupling the hydrolysis of ATP to the transfer of proteins into and across the cell membrane, serving both as a receptor for the preprotein-SecB complex and as an ATP-driven molecular motor driving the stepwise translocation of polypeptide chains across the membrane. The polypeptide is Protein translocase subunit SecA (Buchnera aphidicola subsp. Acyrthosiphon pisum (strain 5A)).